The primary structure comprises 454 residues: Signal recognition particle protein (454 aa).

GTP contacts are provided by residues 102 to 109 (GLQGTGKT), 184 to 188 (DTAGR), and 242 to 245 (TKMD).

Belongs to the GTP-binding SRP family. SRP54 subfamily. In terms of assembly, part of the signal recognition particle protein translocation system, which is composed of SRP and FtsY.

It localises to the cytoplasm. The enzyme catalyses GTP + H2O = GDP + phosphate + H(+). Involved in targeting and insertion of nascent membrane proteins into the cytoplasmic membrane. Binds to the hydrophobic signal sequence of the ribosome-nascent chain (RNC) as it emerges from the ribosomes. The SRP-RNC complex is then targeted to the cytoplasmic membrane where it interacts with the SRP receptor FtsY. This is Signal recognition particle protein from Aquifex aeolicus (strain VF5).